The sequence spans 105 residues: UPF0235 protein A1E_05380 (105 aa).

Belongs to the UPF0235 family.

This Rickettsia canadensis (strain McKiel) protein is UPF0235 protein A1E_05380.